Reading from the N-terminus, the 132-residue chain is Cytochrome B5 isoform C (132 aa).

In terms of domain architecture, Cytochrome b5 heme-binding spans 2-78 (ANLISFHDVA…MKKYCIGDVD (77 aa)). Residues His-37 and His-61 each contribute to the heme site. A helical membrane pass occupies residues 110 to 129 (LLIYLIPLLILGVAFALRFY).

This sequence belongs to the cytochrome b5 family. As to quaternary structure, interacts with CER1, BI-1, FAH1 and FAH2.

It is found in the endoplasmic reticulum membrane. In terms of biological role, membrane bound hemoprotein which function as an electron carrier for several membrane bound oxygenases, including fatty acid desaturases. In Arabidopsis thaliana (Mouse-ear cress), this protein is Cytochrome B5 isoform C.